We begin with the raw amino-acid sequence, 449 residues long: Tryptophan synthase beta chain 2 (449 aa).

K116 carries the N6-(pyridoxal phosphate)lysine modification.

The protein belongs to the TrpB family. As to quaternary structure, tetramer of two alpha and two beta chains. Pyridoxal 5'-phosphate serves as cofactor.

It carries out the reaction (1S,2R)-1-C-(indol-3-yl)glycerol 3-phosphate + L-serine = D-glyceraldehyde 3-phosphate + L-tryptophan + H2O. The protein operates within amino-acid biosynthesis; L-tryptophan biosynthesis; L-tryptophan from chorismate: step 5/5. The beta subunit is responsible for the synthesis of L-tryptophan from indole and L-serine. The sequence is that of Tryptophan synthase beta chain 2 (trpB2) from Aeropyrum pernix (strain ATCC 700893 / DSM 11879 / JCM 9820 / NBRC 100138 / K1).